A 242-amino-acid chain; its full sequence is 1-(5-phosphoribosyl)-5-[(5-phosphoribosylamino)methylideneamino] imidazole-4-carboxamide isomerase (242 aa).

Residue aspartate 8 is the Proton acceptor of the active site. Residue aspartate 129 is the Proton donor of the active site.

Belongs to the HisA/HisF family.

The protein resides in the cytoplasm. The catalysed reaction is 1-(5-phospho-beta-D-ribosyl)-5-[(5-phospho-beta-D-ribosylamino)methylideneamino]imidazole-4-carboxamide = 5-[(5-phospho-1-deoxy-D-ribulos-1-ylimino)methylamino]-1-(5-phospho-beta-D-ribosyl)imidazole-4-carboxamide. The protein operates within amino-acid biosynthesis; L-histidine biosynthesis; L-histidine from 5-phospho-alpha-D-ribose 1-diphosphate: step 4/9. The protein is 1-(5-phosphoribosyl)-5-[(5-phosphoribosylamino)methylideneamino] imidazole-4-carboxamide isomerase of Clostridium botulinum (strain Kyoto / Type A2).